The chain runs to 197 residues: Peptide deformylase (197 aa).

Cys-106 and His-148 together coordinate Fe cation. The active site involves Glu-149. Fe cation is bound at residue His-152.

This sequence belongs to the polypeptide deformylase family. Requires Fe(2+) as cofactor.

It catalyses the reaction N-terminal N-formyl-L-methionyl-[peptide] + H2O = N-terminal L-methionyl-[peptide] + formate. In terms of biological role, removes the formyl group from the N-terminal Met of newly synthesized proteins. Requires at least a dipeptide for an efficient rate of reaction. N-terminal L-methionine is a prerequisite for activity but the enzyme has broad specificity at other positions. This Mycobacterium tuberculosis (strain ATCC 25177 / H37Ra) protein is Peptide deformylase.